The primary structure comprises 512 residues: Cytochrome P450 monooxygenase pbrB (512 aa).

A helical membrane pass occupies residues Leu6–Tyr29. Cys452 serves as a coordination point for heme.

This sequence belongs to the cytochrome P450 family. The cofactor is heme.

It localises to the membrane. It participates in secondary metabolite biosynthesis; terpenoid biosynthesis. In terms of biological role, cytochrome P450 monooxygenase; part of the gene cluster that mediates the biosynthesis of the sesquiterpenoid aspterric acid (AA), an inhibitor of dihydroxy-acid dehydratase (DHAD) effective as an herbicide. PbrB catalyzes the second step within the pathway and converts (-)-daucane produced by the terpene cyclase pbrA into an alpha-epoxy carboxylate intermediate which is further converted into the tricyclic aspterric acid by the cytochrome P450 monooxygenase pbrC. This is Cytochrome P450 monooxygenase pbrB from Penicillium brasilianum.